A 239-amino-acid chain; its full sequence is Ribonuclease PH (239 aa).

Phosphate contacts are provided by residues R86 and 124–126; that span reads GTR.

The protein belongs to the RNase PH family. As to quaternary structure, homohexameric ring arranged as a trimer of dimers.

The enzyme catalyses tRNA(n+1) + phosphate = tRNA(n) + a ribonucleoside 5'-diphosphate. Functionally, phosphorolytic 3'-5' exoribonuclease that plays an important role in tRNA 3'-end maturation. Removes nucleotide residues following the 3'-CCA terminus of tRNAs; can also add nucleotides to the ends of RNA molecules by using nucleoside diphosphates as substrates, but this may not be physiologically important. Probably plays a role in initiation of 16S rRNA degradation (leading to ribosome degradation) during starvation. This is Ribonuclease PH from Psychromonas ingrahamii (strain DSM 17664 / CCUG 51855 / 37).